A 535-amino-acid chain; its full sequence is UDP-N-acetylmuramoyl-L-alanyl-D-glutamate--2,6-diaminopimelate ligase (535 aa).

Leu-67 is a binding site for UDP-N-acetyl-alpha-D-muramoyl-L-alanyl-D-glutamate. An ATP-binding site is contributed by 153–159; the sequence is GTSGKTT. Residues 195–196, Ser-222, and Arg-230 each bind UDP-N-acetyl-alpha-D-muramoyl-L-alanyl-D-glutamate; that span reads TT. Residue Lys-262 is modified to N6-carboxylysine. Residues Arg-424, 448–451, Gly-502, and Glu-506 contribute to the meso-2,6-diaminopimelate site; that span reads DNPR. The Meso-diaminopimelate recognition motif motif lies at 448–451; it reads DNPR.

Belongs to the MurCDEF family. MurE subfamily. Mg(2+) is required as a cofactor. Carboxylation is probably crucial for Mg(2+) binding and, consequently, for the gamma-phosphate positioning of ATP.

It is found in the cytoplasm. It carries out the reaction UDP-N-acetyl-alpha-D-muramoyl-L-alanyl-D-glutamate + meso-2,6-diaminopimelate + ATP = UDP-N-acetyl-alpha-D-muramoyl-L-alanyl-gamma-D-glutamyl-meso-2,6-diaminopimelate + ADP + phosphate + H(+). It participates in cell wall biogenesis; peptidoglycan biosynthesis. Its function is as follows. Catalyzes the addition of meso-diaminopimelic acid to the nucleotide precursor UDP-N-acetylmuramoyl-L-alanyl-D-glutamate (UMAG) in the biosynthesis of bacterial cell-wall peptidoglycan. The polypeptide is UDP-N-acetylmuramoyl-L-alanyl-D-glutamate--2,6-diaminopimelate ligase (Mycobacterium bovis (strain ATCC BAA-935 / AF2122/97)).